A 563-amino-acid chain; its full sequence is Arginine--tRNA ligase (563 aa).

Residues Pro121–His131 carry the 'HIGH' region motif.

This sequence belongs to the class-I aminoacyl-tRNA synthetase family. In terms of assembly, monomer.

The protein localises to the cytoplasm. It catalyses the reaction tRNA(Arg) + L-arginine + ATP = L-arginyl-tRNA(Arg) + AMP + diphosphate. This is Arginine--tRNA ligase from Leuconostoc citreum (strain KM20).